The following is a 378-amino-acid chain: Chaperone protein DnaJ (378 aa).

The J domain maps to 5–70; sequence DFYEVLGLSK…QKRAAYDQYG (66 aa). The CR-type zinc-finger motif lies at 133–211; sequence GITKEIRIPT…CHGDGRVERY (79 aa). Zn(2+)-binding residues include Cys-146, Cys-149, Cys-163, Cys-166, Cys-185, Cys-188, Cys-199, and Cys-202. CXXCXGXG motif repeat units lie at residues 146 to 153, 163 to 170, 185 to 192, and 199 to 206; these read CDKCHGSG, CSTCHGAG, CPTCHGRG, and CSKCHGDG.

It belongs to the DnaJ family. In terms of assembly, homodimer. The cofactor is Zn(2+).

The protein localises to the cytoplasm. Participates actively in the response to hyperosmotic and heat shock by preventing the aggregation of stress-denatured proteins and by disaggregating proteins, also in an autonomous, DnaK-independent fashion. Unfolded proteins bind initially to DnaJ; upon interaction with the DnaJ-bound protein, DnaK hydrolyzes its bound ATP, resulting in the formation of a stable complex. GrpE releases ADP from DnaK; ATP binding to DnaK triggers the release of the substrate protein, thus completing the reaction cycle. Several rounds of ATP-dependent interactions between DnaJ, DnaK and GrpE are required for fully efficient folding. Also involved, together with DnaK and GrpE, in the DNA replication of plasmids through activation of initiation proteins. This is Chaperone protein DnaJ from Proteus mirabilis (strain HI4320).